The primary structure comprises 119 residues: Ribonuclease P protein component (119 aa).

It belongs to the RnpA family. In terms of assembly, consists of a catalytic RNA component (M1 or rnpB) and a protein subunit.

The enzyme catalyses Endonucleolytic cleavage of RNA, removing 5'-extranucleotides from tRNA precursor.. RNaseP catalyzes the removal of the 5'-leader sequence from pre-tRNA to produce the mature 5'-terminus. It can also cleave other RNA substrates such as 4.5S RNA. The protein component plays an auxiliary but essential role in vivo by binding to the 5'-leader sequence and broadening the substrate specificity of the ribozyme. The protein is Ribonuclease P protein component of Streptococcus pyogenes serotype M12 (strain MGAS2096).